Here is a 254-residue protein sequence, read N- to C-terminus: Glc operon transcriptional activator (254 aa).

One can recognise an HTH gntR-type domain in the interval 6-74 (RPICEVVAES…QGRDSRVARL (69 aa)). Positions 34–53 (ERRLCEKLGFSRSALREGLT) form a DNA-binding region, H-T-H motif.

Its function is as follows. Transcriptional activator of the glcDEFGB operon which is associated with glycolate utilization, and encodes malate synthase G and the genes needed for glycolate oxidase activity. Also negatively regulates the transcription of its own gene. Glycolate acts as an effector, but GlcC can also use acetate as an alternative effector. This Escherichia coli O6:H1 (strain CFT073 / ATCC 700928 / UPEC) protein is Glc operon transcriptional activator (glcC).